Consider the following 360-residue polypeptide: Phospho-N-acetylmuramoyl-pentapeptide-transferase (360 aa).

The next 10 membrane-spanning stretches (helical) occupy residues 18-38 (VFSY…VFSL), 73-93 (TMGG…WGDL), 97-117 (YVLV…IDDY), 134-154 (YILQ…SSTL), 168-188 (VMPQ…VGAS), 199-219 (GLAI…AYLS), 236-256 (AGEL…FLWF), 263-283 (VFMG…IAVL), 288-308 (ILLV…ILQV), and 338-358 (VIVR…ATLK).

Belongs to the glycosyltransferase 4 family. MraY subfamily. Mg(2+) is required as a cofactor.

The protein localises to the cell inner membrane. It carries out the reaction UDP-N-acetyl-alpha-D-muramoyl-L-alanyl-gamma-D-glutamyl-meso-2,6-diaminopimeloyl-D-alanyl-D-alanine + di-trans,octa-cis-undecaprenyl phosphate = di-trans,octa-cis-undecaprenyl diphospho-N-acetyl-alpha-D-muramoyl-L-alanyl-D-glutamyl-meso-2,6-diaminopimeloyl-D-alanyl-D-alanine + UMP. Its pathway is cell wall biogenesis; peptidoglycan biosynthesis. Functionally, catalyzes the initial step of the lipid cycle reactions in the biosynthesis of the cell wall peptidoglycan: transfers peptidoglycan precursor phospho-MurNAc-pentapeptide from UDP-MurNAc-pentapeptide onto the lipid carrier undecaprenyl phosphate, yielding undecaprenyl-pyrophosphoryl-MurNAc-pentapeptide, known as lipid I. The polypeptide is Phospho-N-acetylmuramoyl-pentapeptide-transferase (Shewanella denitrificans (strain OS217 / ATCC BAA-1090 / DSM 15013)).